The primary structure comprises 333 residues: Foldase protein PrsA (333 aa).

Residues 1 to 22 (MKSAKQIATALLVGMFTFSAVG) form the signal peptide. A lipid anchor (N-palmitoyl cysteine) is attached at Cys23. Cys23 is lipidated: S-diacylglycerol cysteine. In terms of domain architecture, PpiC spans 192–283 (PNTVHLAHIL…FGWHVIKCIK (92 aa)).

Belongs to the PrsA family.

It localises to the cell membrane. The catalysed reaction is [protein]-peptidylproline (omega=180) = [protein]-peptidylproline (omega=0). Functionally, plays a major role in protein secretion by helping the post-translocational extracellular folding of several secreted proteins. The sequence is that of Foldase protein PrsA from Clostridium acetobutylicum (strain ATCC 824 / DSM 792 / JCM 1419 / IAM 19013 / LMG 5710 / NBRC 13948 / NRRL B-527 / VKM B-1787 / 2291 / W).